The following is a 327-amino-acid chain: DNA-directed RNA polymerase subunit alpha (327 aa).

An alpha N-terminal domain (alpha-NTD) region spans residues 1–233 (MVREKVKVST…NLFIPFLHVE (233 aa)). The alpha C-terminal domain (alpha-CTD) stretch occupies residues 267-327 (LAFQYIFIDQ…KKILDILEKK (61 aa)).

The protein belongs to the RNA polymerase alpha chain family. In terms of assembly, in plastids the minimal PEP RNA polymerase catalytic core is composed of four subunits: alpha, beta, beta', and beta''. When a (nuclear-encoded) sigma factor is associated with the core the holoenzyme is formed, which can initiate transcription.

It localises to the plastid. Its subcellular location is the chloroplast. It catalyses the reaction RNA(n) + a ribonucleoside 5'-triphosphate = RNA(n+1) + diphosphate. Functionally, DNA-dependent RNA polymerase catalyzes the transcription of DNA into RNA using the four ribonucleoside triphosphates as substrates. The polypeptide is DNA-directed RNA polymerase subunit alpha (Lobularia maritima (Sweet alyssum)).